We begin with the raw amino-acid sequence, 140 residues long: ATP synthase epsilon chain (140 aa).

This sequence belongs to the ATPase epsilon chain family. F-type ATPases have 2 components, CF(1) - the catalytic core - and CF(0) - the membrane proton channel. CF(1) has five subunits: alpha(3), beta(3), gamma(1), delta(1), epsilon(1). CF(0) has three main subunits: a, b and c.

The protein localises to the cell inner membrane. Produces ATP from ADP in the presence of a proton gradient across the membrane. The chain is ATP synthase epsilon chain from Xanthomonas oryzae pv. oryzae (strain PXO99A).